We begin with the raw amino-acid sequence, 527 residues long: MQAHAAETKKVDVLLVGGGIMSSTLAVWLHELEPSWSMEMVERLDGVAEESSNGWNNAGTGHSALAELNYTPEDKDGNVNISKAIEINEAFQISRQFWSWQVRQGVLKNPHSFINTTPHMSFVWGDDNIKFLKKRYDALQASPLFRPMQYSEDHAQIAKWVPLMMEGRDPNQKLAVTWTPIGTDVNFGEITRQFVGHLQTQKGFELKLSSEVQDITRNKDGSWHVEYKNLKDGTESATDAKFLFIGAGGGALKLLQKSGIPEAKEYAGFPVGGSFLVTENPTVAMQHMAKAYGIASTGAPPMSVPHLDTRVLDGKRVILFGPFATFSTKFLKNGSYLDLLSSTTTHNVWPMTKVGIDQYPLVEYLAGQLMLSDDDRFEALRTYFPNAKKEEWRLWQAGQRVQIIKRDAEKGGVLKLGTEVVASEDRTIAGLLGASPGASTAAPIMLHVLETVFKEKVATPEWQAKIKEIVPSYGTKLNDSAAATQKEWNYTAEVLQLGKPPVIDASVEFGGAASKPVESKPENDMAL.

The protein belongs to the MQO family. Requires FAD as cofactor.

The enzyme catalyses (S)-malate + a quinone = a quinol + oxaloacetate. It functions in the pathway carbohydrate metabolism; tricarboxylic acid cycle; oxaloacetate from (S)-malate (quinone route): step 1/1. The chain is Probable malate:quinone oxidoreductase 2 from Pseudomonas putida (strain ATCC 47054 / DSM 6125 / CFBP 8728 / NCIMB 11950 / KT2440).